Consider the following 160-residue polypeptide: Protein-export protein SecB (160 aa).

The protein belongs to the SecB family. As to quaternary structure, homotetramer, a dimer of dimers. One homotetramer interacts with 1 SecA dimer.

The protein localises to the cytoplasm. Its function is as follows. One of the proteins required for the normal export of preproteins out of the cell cytoplasm. It is a molecular chaperone that binds to a subset of precursor proteins, maintaining them in a translocation-competent state. It also specifically binds to its receptor SecA. In Burkholderia lata (strain ATCC 17760 / DSM 23089 / LMG 22485 / NCIMB 9086 / R18194 / 383), this protein is Protein-export protein SecB.